Consider the following 816-residue polypeptide: Endo-acting ulvan lyase (816 aa).

Residues 1–23 (MGTSVRRISVVLMMLFGTNFCWS) form the signal peptide.

The protein belongs to the polysaccharide lyase family.

The protein resides in the cell surface. It is found in the periplasm. In terms of biological role, ulvan lyase involved in ulvan degradation. Ulvan is the main polysaccharide component of the Ulvales (green seaweed) cell wall. It is composed of disaccharide building blocks comprising 3-sulfated rhamnose (Rha3S) linked to D-glucuronic acid (GlcA), L-iduronic acid (IduA), or D-xylose (Xyl). Ulvan lyase catalyzes the endolytic cleavage of the glycosidic bond between Rha3S and the uronic acids GlcA or IduA, producing oligosaccharides that have unsaturated 4-deoxy-L-threo-hex-4-enopyranosiduronic acid (deltaUA) at the non-reducing end. This results eventually in the degradation of the ulvan polysaccharide into deltaUA-Rha3S disaccharides and deltaUA-Rha3S-Xyl-Rha3S tetrasaccharides. This is Endo-acting ulvan lyase from Formosa agariphila (strain DSM 15362 / KCTC 12365 / LMG 23005 / KMM 3901 / M-2Alg 35-1).